The primary structure comprises 159 residues: Nucleoside diphosphate kinase (159 aa).

The ATP site is built by Lys14, Phe62, Arg90, Thr96, and Arg107. The active-site Pros-phosphohistidine intermediate is the His123.

It belongs to the NDK family. Mg(2+) is required as a cofactor.

It localises to the cytoplasm. The enzyme catalyses a 2'-deoxyribonucleoside 5'-diphosphate + ATP = a 2'-deoxyribonucleoside 5'-triphosphate + ADP. It catalyses the reaction a ribonucleoside 5'-diphosphate + ATP = a ribonucleoside 5'-triphosphate + ADP. Its function is as follows. Major role in the synthesis of nucleoside triphosphates other than ATP. The ATP gamma phosphate is transferred to the NDP beta phosphate via a ping-pong mechanism, using a phosphorylated active-site intermediate. This chain is Nucleoside diphosphate kinase, found in Pyrococcus abyssi (strain GE5 / Orsay).